The primary structure comprises 460 residues: Hydroxyproline dehydrogenase (460 aa).

Lys310 bears the N6-acetyllysine mark.

This sequence belongs to the proline oxidase family. FAD serves as cofactor.

It catalyses the reaction trans-4-hydroxy-L-proline + a quinone = (3R,5S)-1-pyrroline-3-hydroxy-5-carboxylate + a quinol + H(+). The catalysed reaction is L-proline + a quinone = (S)-1-pyrroline-5-carboxylate + a quinol + H(+). Its activity is regulated as follows. Hydroproxyproline dehydrogenase activity is inhibited by THFA,(1R,3R)3-OH-cyclopentane-COOH and 5-OH-1H-pyrazole-3-COOH. Dehydrogenase that converts trans-4-L-hydroxyproline to delta-1-pyrroline-3-hydroxy-5-carboxylate (Hyp) using ubiquinone-10 as the terminal electron acceptor. Can also use proline as a substrate but with a very much lower efficiency. Does not react with other diastereomers of Hyp: trans-4-D-hydroxyproline and cis-4-L-hydroxyproline. Ubiquininone analogs such as menadione, duroquinone and ubiquinone-1 react more efficiently than oxygen as the terminal electron acceptor during catalysis. This chain is Hydroxyproline dehydrogenase, found in Homo sapiens (Human).